The primary structure comprises 685 residues: DNA ligase (685 aa).

NAD(+)-binding positions include 47–51, 96–97, and glutamate 125; these read DSEYD and SL. Catalysis depends on lysine 127, which acts as the N6-AMP-lysine intermediate. NAD(+) contacts are provided by arginine 148, glutamate 185, lysine 304, and lysine 328. The Zn(2+) site is built by cysteine 422, cysteine 425, cysteine 440, and cysteine 446. The region spanning 605-685 is the BRCT domain; it reads ADAQPLKGQT…ELLALLAANA (81 aa).

It belongs to the NAD-dependent DNA ligase family. LigA subfamily. Requires Mg(2+) as cofactor. Mn(2+) is required as a cofactor.

The catalysed reaction is NAD(+) + (deoxyribonucleotide)n-3'-hydroxyl + 5'-phospho-(deoxyribonucleotide)m = (deoxyribonucleotide)n+m + AMP + beta-nicotinamide D-nucleotide.. Its function is as follows. DNA ligase that catalyzes the formation of phosphodiester linkages between 5'-phosphoryl and 3'-hydroxyl groups in double-stranded DNA using NAD as a coenzyme and as the energy source for the reaction. It is essential for DNA replication and repair of damaged DNA. The polypeptide is DNA ligase (Shewanella baltica (strain OS195)).